Here is a 184-residue protein sequence, read N- to C-terminus: Mediator of RNA polymerase II transcription subunit 30 (184 aa).

A coiled-coil region spans residues 136 to 179 (SQLRFASEEKREILEVNKKLKQKNQQLKQIMDQLRNLIWDINSM).

This sequence belongs to the Mediator complex subunit 30 family. As to quaternary structure, component of the Mediator complex.

The protein resides in the nucleus. Component of the Mediator complex, a coactivator involved in the regulated transcription of nearly all RNA polymerase II-dependent genes. Mediator functions as a bridge to convey information from gene-specific regulatory proteins to the basal RNA polymerase II transcription machinery. Mediator is recruited to promoters by direct interactions with regulatory proteins and serves as a scaffold for the assembly of a functional preinitiation complex with RNA polymerase II and the general transcription factors. The polypeptide is Mediator of RNA polymerase II transcription subunit 30 (med30) (Xenopus laevis (African clawed frog)).